The following is a 91-amino-acid chain: Small ribosomal subunit protein uS19 (91 aa).

Belongs to the universal ribosomal protein uS19 family.

Its function is as follows. Protein S19 forms a complex with S13 that binds strongly to the 16S ribosomal RNA. The sequence is that of Small ribosomal subunit protein uS19 from Marinomonas sp. (strain MWYL1).